A 295-amino-acid polypeptide reads, in one-letter code: Tyrosine recombinase XerD (295 aa).

The Core-binding (CB) domain maps to 1–85 (METIIEEYLK…TIRSFHQFAL (85 aa)). The Tyr recombinase domain maps to 106 to 289 (KLPDVLDVEE…SKTQIRQMYN (184 aa)). Active-site residues include Arg146, Lys170, His241, Arg244, and His267. The active-site O-(3'-phospho-DNA)-tyrosine intermediate is Tyr276.

Belongs to the 'phage' integrase family. XerD subfamily. As to quaternary structure, forms a cyclic heterotetrameric complex composed of two molecules of XerC and two molecules of XerD.

It localises to the cytoplasm. Site-specific tyrosine recombinase, which acts by catalyzing the cutting and rejoining of the recombining DNA molecules. The XerC-XerD complex is essential to convert dimers of the bacterial chromosome into monomers to permit their segregation at cell division. It also contributes to the segregational stability of plasmids. This Staphylococcus haemolyticus (strain JCSC1435) protein is Tyrosine recombinase XerD.